A 205-amino-acid chain; its full sequence is MTKIVRSKYKASRRLGVSLWGDSKDAFNTRNYRPGQHGQNTMIKTSDYGLHLKAKQRLKCHYGRVTEKQFRNIFALAQKMKGNTGENFIGLLESRLDTVVYRMNIAPTIFAARQLVSHGHIKLNGKKADIASIRLKAGDVIEVKESVKQIPLIQESVSKQGQTTPGYLSFDVPSLTGKYLRVPALSDVPYPFEAEVHLVIELYSR.

An S4 RNA-binding domain is found at 94-157 (SRLDTVVYRM…KQIPLIQESV (64 aa)).

This sequence belongs to the universal ribosomal protein uS4 family. As to quaternary structure, part of the 30S ribosomal subunit. Contacts protein S5. The interaction surface between S4 and S5 is involved in control of translational fidelity.

Its function is as follows. One of the primary rRNA binding proteins, it binds directly to 16S rRNA where it nucleates assembly of the body of the 30S subunit. In terms of biological role, with S5 and S12 plays an important role in translational accuracy. The chain is Small ribosomal subunit protein uS4 from Rickettsia conorii (strain ATCC VR-613 / Malish 7).